The primary structure comprises 385 residues: Probable dual-specificity RNA methyltransferase RlmN (385 aa).

A disordered region spans residues 1–35 (MNVKEPAEEAAIQLRTERQRIEPEGEEQSEQPTDL). E121 acts as the Proton acceptor in catalysis. A Radical SAM core domain is found at 132–367 (TRDRVTVCLS…AVIREERGQD (236 aa)). C139 and C372 are joined by a disulfide. Positions 146, 150, and 153 each coordinate [4Fe-4S] cluster. S-adenosyl-L-methionine contacts are provided by residues 198–199 (GE), S230, 253–255 (SLH), and N329. Catalysis depends on C372, which acts as the S-methylcysteine intermediate.

It belongs to the radical SAM superfamily. RlmN family. [4Fe-4S] cluster is required as a cofactor.

The protein resides in the cytoplasm. It catalyses the reaction adenosine(2503) in 23S rRNA + 2 reduced [2Fe-2S]-[ferredoxin] + 2 S-adenosyl-L-methionine = 2-methyladenosine(2503) in 23S rRNA + 5'-deoxyadenosine + L-methionine + 2 oxidized [2Fe-2S]-[ferredoxin] + S-adenosyl-L-homocysteine. It carries out the reaction adenosine(37) in tRNA + 2 reduced [2Fe-2S]-[ferredoxin] + 2 S-adenosyl-L-methionine = 2-methyladenosine(37) in tRNA + 5'-deoxyadenosine + L-methionine + 2 oxidized [2Fe-2S]-[ferredoxin] + S-adenosyl-L-homocysteine. Functionally, specifically methylates position 2 of adenine 2503 in 23S rRNA and position 2 of adenine 37 in tRNAs. This Heliobacterium modesticaldum (strain ATCC 51547 / Ice1) protein is Probable dual-specificity RNA methyltransferase RlmN.